The chain runs to 338 residues: Ferredoxin--NADP reductase (338 aa).

Positions 38, 46, 51, 91, 125, 291, and 331 each coordinate FAD.

The protein belongs to the ferredoxin--NADP reductase type 2 family. In terms of assembly, homodimer. Requires FAD as cofactor.

It catalyses the reaction 2 reduced [2Fe-2S]-[ferredoxin] + NADP(+) + H(+) = 2 oxidized [2Fe-2S]-[ferredoxin] + NADPH. The sequence is that of Ferredoxin--NADP reductase from Orientia tsutsugamushi (strain Ikeda) (Rickettsia tsutsugamushi).